A 264-amino-acid chain; its full sequence is Thymidylate synthase (264 aa).

Residue Arg21 coordinates dUMP. (6R)-5,10-methylene-5,6,7,8-tetrahydrofolate is bound at residue His51. 126 to 127 (RR) is a dUMP binding site. Catalysis depends on Cys146, which acts as the Nucleophile. DUMP is bound by residues 166–169 (RSCD), Asn177, and 207–209 (HLY). (6R)-5,10-methylene-5,6,7,8-tetrahydrofolate is bound at residue Asp169. (6R)-5,10-methylene-5,6,7,8-tetrahydrofolate is bound at residue Ala263.

Belongs to the thymidylate synthase family. Bacterial-type ThyA subfamily. Homodimer.

The protein localises to the cytoplasm. The catalysed reaction is dUMP + (6R)-5,10-methylene-5,6,7,8-tetrahydrofolate = 7,8-dihydrofolate + dTMP. The protein operates within pyrimidine metabolism; dTTP biosynthesis. Functionally, catalyzes the reductive methylation of 2'-deoxyuridine-5'-monophosphate (dUMP) to 2'-deoxythymidine-5'-monophosphate (dTMP) while utilizing 5,10-methylenetetrahydrofolate (mTHF) as the methyl donor and reductant in the reaction, yielding dihydrofolate (DHF) as a by-product. This enzymatic reaction provides an intracellular de novo source of dTMP, an essential precursor for DNA biosynthesis. This Pectobacterium carotovorum subsp. carotovorum (strain PC1) protein is Thymidylate synthase.